We begin with the raw amino-acid sequence, 265 residues long: MEENEQNNREVEPQQESGEESNRGILHQAPPGNHQPHHRITNFFIDNILRPEFGRRKERINHQDELFTGRDTGALSGAESGHHRVNVPEGAGGSSKVITVTGEKKSDLAMEETLKSRGLNGDHSLSSDSDSSQASSKATQKPILWPAWVYCTRYSDRPSSGPRSRKPKKKSVSKEDKRPRTAFTAEQLQRLKAEFQTNRYLTEQRRQSLAQELGLNESQIKIWFQNKRAKIKKSTGNKNSLALHLMAQGLYNHATTSKDGKSDSE.

Basic and acidic residues-rich tracts occupy residues 1 to 12 (MEENEQNNREVE) and 102 to 115 (GEKK…ETLK). Disordered stretches follow at residues 1 to 38 (MEEN…QPHH), 60 to 138 (INHQ…SSKA), and 156 to 182 (DRPS…PRTA). Residues 122–136 (DHSLSSDSDSSQASS) show a composition bias toward low complexity. The homeobox DNA-binding region spans 176 to 235 (DKRPRTAFTAEQLQRLKAEFQTNRYLTEQRRQSLAQELGLNESQIKIWFQNKRAKIKKST).

The protein belongs to the engrailed homeobox family.

The protein localises to the nucleus. This is Homeobox protein engrailed-2-B (en2-b) from Xenopus laevis (African clawed frog).